The chain runs to 125 residues: uncharacterized protein (125 aa).

The protein belongs to the asfivirus B125R family.

This is an uncharacterized protein from African swine fever virus (isolate Tick/Malawi/Lil 20-1/1983) (ASFV).